We begin with the raw amino-acid sequence, 601 residues long: NAD(+)--arginine ADP-ribosyltransferase Chelt (601 aa).

A signal peptide spans 1–18 (MKTIISLIFIMFPLFVSA). NAD(+) contacts are provided by residues 26–43 (ADSRSPNEIKDLGGLYPR) and glutamate 130. The active site involves glutamate 130. Residues cysteine 205 and cysteine 220 are joined by a disulfide bond.

Belongs to the enterotoxin A family.

It is found in the secreted. The enzyme catalyses L-arginyl-[protein] + NAD(+) = N(omega)-(ADP-D-ribosyl)-L-arginyl-[protein] + nicotinamide + H(+). A probable mono(ADP-ribosyl)transferase, it may ADP-ribosylate Arg in target protein(s). Upon expression in yeast cells causes cell death. This chain is NAD(+)--arginine ADP-ribosyltransferase Chelt, found in Vibrio cholerae.